Reading from the N-terminus, the 85-residue chain is Small integral membrane protein 2 (85 aa).

Residues 21–43 traverse the membrane as a helical segment; it reads GHAISILFGFWTSFICDTYIVLA. Residues 51–85 are disordered; the sequence is SPDVSASSDEPYARIQQSRRQCHAEEDQSQVPEAG.

Its subcellular location is the membrane. The polypeptide is Small integral membrane protein 2 (SMIM2) (Homo sapiens (Human)).